Consider the following 126-residue polypeptide: Follitropin subunit beta (126 aa).

An N-terminal signal peptide occupies residues 1 to 19 (MKLIQLCILFWCWRAICCQ). Disulfide bonds link C21–C69, C35–C84, C38–C122, C46–C100, C50–C102, and C105–C112. N-linked (GlcNAc...) asparagine glycosylation is found at N25 and N42.

The protein belongs to the glycoprotein hormones subunit beta family. As to quaternary structure, heterodimer. The active follitropin is a heterodimer composed of an alpha chain/CGA shared with other hormones and a unique beta chain/FSHB shown here.

The protein localises to the secreted. In terms of biological role, together with the alpha chain CGA constitutes follitropin, the follicle-stimulating hormone, and provides its biological specificity to the hormone heterodimer. Binds FSHR, a G protein-coupled receptor, on target cells to activate downstream signaling pathways. Follitropin is involved in follicle development and spermatogenesis in reproductive organs. This Phodopus sungorus (Striped hairy-footed hamster) protein is Follitropin subunit beta (FSHB).